The primary structure comprises 788 residues: Ribonucleoside-diphosphate reductase subunit alpha (788 aa).

The 91-residue stretch at 2–92 (ITVVKRNGRI…LYDLYHKVSG (91 aa)) folds into the ATP-cone domain. ATP is bound by residues K6, 12-18 (EPLDITK), and T52. Position 200 (T200) interacts with GDP. Residues C216 and C497 are joined by a disulfide bond. DTTP is bound by residues 223-225 (DNI) and R253. Residue N424 participates in GDP binding. N424 functions as the Proton acceptor in the catalytic mechanism. C426 acts as the Cysteine radical intermediate in catalysis. GDP-binding positions include E428 and 661–663 (SSI). The active-site Proton acceptor is E428.

It belongs to the ribonucleoside diphosphate reductase large chain family. Tetramer of two alpha and two beta subunits.

It carries out the reaction a 2'-deoxyribonucleoside 5'-diphosphate + [thioredoxin]-disulfide + H2O = a ribonucleoside 5'-diphosphate + [thioredoxin]-dithiol. With respect to regulation, under complex allosteric control mediated by deoxynucleoside triphosphates and ATP binding to separate specificity and activation sites on the alpha subunit. The type of nucleotide bound at the specificity site determines substrate preference. It seems probable that ATP makes the enzyme reduce CDP and UDP, dGTP favors ADP reduction and dTTP favors GDP reduction. Stimulated by ATP and inhibited by dATP binding to the activity site. In terms of biological role, provides the precursors necessary for DNA synthesis. Catalyzes the biosynthesis of deoxyribonucleotides from the corresponding ribonucleotides. In Helicobacter pylori (strain J99 / ATCC 700824) (Campylobacter pylori J99), this protein is Ribonucleoside-diphosphate reductase subunit alpha (nrdA).